The sequence spans 225 residues: NAD(P)H-quinone oxidoreductase subunit K, chloroplastic (225 aa).

[4Fe-4S] cluster contacts are provided by cysteine 43, cysteine 44, cysteine 108, and cysteine 139.

It belongs to the complex I 20 kDa subunit family. NDH is composed of at least 16 different subunits, 5 of which are encoded in the nucleus. [4Fe-4S] cluster serves as cofactor.

It localises to the plastid. Its subcellular location is the chloroplast thylakoid membrane. It catalyses the reaction a plastoquinone + NADH + (n+1) H(+)(in) = a plastoquinol + NAD(+) + n H(+)(out). The enzyme catalyses a plastoquinone + NADPH + (n+1) H(+)(in) = a plastoquinol + NADP(+) + n H(+)(out). Its function is as follows. NDH shuttles electrons from NAD(P)H:plastoquinone, via FMN and iron-sulfur (Fe-S) centers, to quinones in the photosynthetic chain and possibly in a chloroplast respiratory chain. The immediate electron acceptor for the enzyme in this species is believed to be plastoquinone. Couples the redox reaction to proton translocation, and thus conserves the redox energy in a proton gradient. This is NAD(P)H-quinone oxidoreductase subunit K, chloroplastic from Lepidium virginicum (Virginia pepperweed).